Reading from the N-terminus, the 286-residue chain is Bifunctional protein FolD (286 aa).

NADP(+) contacts are provided by residues 165–167 (GRS) and serine 190.

The protein belongs to the tetrahydrofolate dehydrogenase/cyclohydrolase family. As to quaternary structure, homodimer.

It carries out the reaction (6R)-5,10-methylene-5,6,7,8-tetrahydrofolate + NADP(+) = (6R)-5,10-methenyltetrahydrofolate + NADPH. It catalyses the reaction (6R)-5,10-methenyltetrahydrofolate + H2O = (6R)-10-formyltetrahydrofolate + H(+). It participates in one-carbon metabolism; tetrahydrofolate interconversion. Its function is as follows. Catalyzes the oxidation of 5,10-methylenetetrahydrofolate to 5,10-methenyltetrahydrofolate and then the hydrolysis of 5,10-methenyltetrahydrofolate to 10-formyltetrahydrofolate. The protein is Bifunctional protein FolD of Staphylococcus epidermidis (strain ATCC 12228 / FDA PCI 1200).